Consider the following 170-residue polypeptide: Myosin regulatory light chain 2, skeletal muscle isoform type 1 (170 aa).

Alanine 2 is subject to N,N,N-trimethylalanine. Phosphoserine is present on residues serine 16 and serine 17. Phosphothreonine occurs at positions 26 and 36. The EF-hand 1 domain maps to 26-61 (TQIQEFKEAFTVIDQNRDGIIDKEDLRDTFAAMGRL). Ca(2+)-binding residues include aspartate 39, asparagine 41, aspartate 43, and aspartate 50. Position 76 is a phosphoserine (serine 76). EF-hand domains are found at residues 96-131 (DPED…QCDR) and 132-167 (FSQE…GDAK). Threonine 102 is modified (phosphothreonine).

Myosin is a hexamer of 2 heavy chains and 4 light chains.

In Oryctolagus cuniculus (Rabbit), this protein is Myosin regulatory light chain 2, skeletal muscle isoform type 1.